Here is a 270-residue protein sequence, read N- to C-terminus: Interleukin-2 receptor subunit alpha (270 aa).

The signal sequence occupies residues 1–21 (MEPSLLMWGFFTFTMIPGCMA). One can recognise a Sushi 1 domain in the interval 22-84 (GACVQQPPSL…FWENKCQCMP (63 aa)). At 22-245 (GACVQQPPSL…QPIIFTTQYQ (224 aa)) the chain is on the extracellular side. Cystine bridges form between Cys-24–Cys-67, Cys-49–Cys-80, and Cys-51–Cys-82. N-linked (GlcNAc...) asparagine glycosylation is found at Asn-33 and Asn-70. The disordered stretch occupies residues 87–124 (SPRIPVKQVTPRPEEQKERKTTETQGQMQPPNQANLPG). A compositionally biased stretch (basic and acidic residues) spans 98–108 (RPEEQKERKTT). Polar residues predominate over residues 112-121 (GQMQPPNQAN). One can recognise a Sushi 2 domain in the interval 124 to 191 (GHCKEPPPWE…WTQPKLKCKS (68 aa)). 2 disulfide bridges follow: Cys-126–Cys-171 and Cys-153–Cys-189. Asn-164 and Asn-195 each carry an N-linked (GlcNAc...) asparagine glycan. Residues 190 to 225 (KSEKENGSFPEPQMSTAAPPTTKTSLPTRTKGTTDS) are disordered. Residues 202 to 225 (QMSTAAPPTTKTSLPTRTKGTTDS) show a composition bias toward polar residues. Asn-227 carries N-linked (GlcNAc...) asparagine glycosylation. Residues 246–264 (LAVAGCVLLLLSILLLSGL) traverse the membrane as a helical segment. At 265–270 (TWQRRR) the chain is on the cytoplasmic side.

As to quaternary structure, non-covalent dimer of an alpha and a beta subunit. IL2R exists in 3 different forms: a high affinity dimer, an intermediate affinity monomer (beta subunit), and a low affinity monomer (alpha subunit). The high and intermediate affinity forms also associate with a gamma subunit.

The protein resides in the membrane. In terms of biological role, receptor for interleukin-2. The receptor is involved in the regulation of immune tolerance by controlling regulatory T cells (TREGs) activity. TREGs suppress the activation and expansion of autoreactive T-cells. The sequence is that of Interleukin-2 receptor subunit alpha (IL2RA) from Sus scrofa (Pig).